Here is a 136-residue protein sequence, read N- to C-terminus: Plastocyanin (136 aa).

Residues 1-34 (MSLVFNLVKRLQLILLSLVVGGLAVAFLSNPAAA) form the signal peptide. One can recognise a Plastocyanin-like domain in the interval 35-136 (ETYIVKMGSD…GMVGKIIVNG (102 aa)). Cu cation-binding residues include H73, C120, H123, and M128.

Belongs to the plastocyanin family. Requires Cu(2+) as cofactor.

It is found in the cellular thylakoid membrane. Functionally, participates in electron transfer between P700 and the cytochrome b6-f complex in photosystem I. This Synechococcus sp. (strain JA-2-3B'a(2-13)) (Cyanobacteria bacterium Yellowstone B-Prime) protein is Plastocyanin.